The primary structure comprises 439 residues: Trigger factor (439 aa).

The PPIase FKBP-type domain maps to G162–P247.

It belongs to the FKBP-type PPIase family. Tig subfamily.

The protein resides in the cytoplasm. The catalysed reaction is [protein]-peptidylproline (omega=180) = [protein]-peptidylproline (omega=0). Functionally, involved in protein export. Acts as a chaperone by maintaining the newly synthesized protein in an open conformation. Functions as a peptidyl-prolyl cis-trans isomerase. The protein is Trigger factor of Dichelobacter nodosus (strain VCS1703A).